We begin with the raw amino-acid sequence, 770 residues long: Signal transducer and activator of transcription 3 (770 aa).

Alanine 2 is subject to N-acetylalanine. N6-acetyllysine occurs at positions 49 and 87. The short motif at 150 to 162 is the Essential for nuclear import element; it reads DVRKRVQDLEQKM. The SH2 domain maps to 580–670; sequence WNEGYIMGFI…DATNILVSPL (91 aa). Allysine; alternate is present on residues lysine 601, lysine 615, and lysine 631. An N6-acetyllysine; alternate mark is found at lysine 601, lysine 615, and lysine 631. At tyrosine 640 the chain carries Phosphotyrosine; by TYK2. The residue at position 685 (lysine 685) is an Allysine; alternate. Position 685 is an N6-acetyllysine; alternate (lysine 685). A Phosphotyrosine modification is found at proline 704. Tyrosine 705 carries the post-translational modification Phosphotyrosine; by FER and PTK6. At lysine 707 the chain carries N6-acetyllysine. Position 714 is a phosphothreonine (threonine 714). Phosphoserine; by DYRK2, NLK, NEK6, IRAK1, RPS6KA5, ZIPK/DAPK3 and PKC/PRKCE is present on serine 727.

It belongs to the transcription factor STAT family. As to quaternary structure, forms a homodimer or a heterodimer with a related family member (at least STAT1). Component of a promoter-binding complex composed of STAT3, NFATC3 and NFATC4; complex formation is enhanced by calcineurin. Interacts with IL31RA, NCOA1, PELP1, SIPAR, SOCS7, STATIP1 and TMF1. Interacts with IL23R in presence of IL23. Interacts (via SH2 domain) with NLK. Interacts with ARL2BP; the interaction is enhanced by LIF and JAK1 expression. Interacts with KPNA4 and KPNA5; KPNA4 may be the primary mediator of nuclear import. Interacts with CAV2; the interaction is increased on insulin-induced tyrosine phosphorylation of CAV2 and leads to STAT3 activation. Interacts with ARL2BP; interaction is enhanced with ARL2. Interacts with NEK6. Binds to CDK9 when activated and nuclear. Interacts with BMX. Interacts with ZIPK/DAPK3. Interacts with PIAS3; the interaction occurs on stimulation by IL6, CNTF or OSM and inhibits the DNA binding activity of STAT3. In prostate cancer cells, interacts with PRKCE and promotes DNA binding activity of STAT3. Interacts with STMN3, antagonizing its microtubule-destabilizing activity. Interacts with the 'Lys-129' acetylated form of BIRC5/survivin. Interacts with FER. Interacts (via SH2 domain) with EIF2AK2/PKR (via the kinase catalytic domain). Interacts with INPP5F; the interaction is independent of STAT3 Tyr-705 phosphorylation status. Interacts with FGFR4. Interacts with OCIAD1. Interacts with OCIAD2. Interacts (unphosphorylated or phosphorylated at Ser-727) with PHB1. Interacts and may form heterodimers with NHLH1. Found in a complex with SLC39A6, SLC39A10 and with the 'Ser-727' phosphorylated form of STAT3 throughout mitosis. Interacts (when phosphorylated at Tyr-705) with CD274/PD-L1; promoting nuclear translocation of CD274/PD-L1. Interacts (when acetylated) with EP300 (via bromo domain); interaction takes place following STAT3 acetylation by EP300 and promotes enhanceosome assembly. Interacts (when acetylated) with BRD2 (via bromo domain); interaction promotes STAT3 recruitment to chromatin and T-helper Th17 cell differentiation. Interacts with FAM220A/SIPAR; the interaction occurs in both the nucleus and the cytoplasm, is enhanced by IL6 and promotes STAT3 dephosphorylation. Interacts in both unphosphorylated and phosphorylated forms with FAM220A but interacts preferentially in the phosphorylated form in the nucleus. Interacts with PTPN2; the interaction is promoted by FAM220A and leads to STAT3 dephosphorylation which negatively regulates STAT3 transcriptional activator activity. In terms of assembly, (Microbial infection) Interacts with HCV core protein. (Microbial infection) Interacts with S.typhimurium SarA. As to quaternary structure, (Microbial infection) Interacts with human cytomegalovirus (HHV-5) immediate early protein IE1; this interaction leads to STAT3 nuclear accumulation and disruption of IL6-induced STAT3 phosphorylation. Tyrosine phosphorylated upon stimulation with EGF. Tyrosine phosphorylated in response to constitutively activated FGFR1, FGFR2, FGFR3 and FGFR4. Activated through tyrosine phosphorylation by BMX. Tyrosine phosphorylated in response to IL6, IL11, LIF, CNTF, KITLG/SCF, CSF1, EGF, PDGF, IFN-alpha, LEP and OSM. Activated KIT promotes phosphorylation on tyrosine residues and subsequent translocation to the nucleus. Phosphorylated on serine upon DNA damage, probably by ATM or ATR. Serine phosphorylation is important for the formation of stable DNA-binding STAT3 homodimers and maximal transcriptional activity. ARL2BP may participate in keeping the phosphorylated state of STAT3 within the nucleus. Upon LPS challenge, phosphorylated within the nucleus by IRAK1. Upon erythropoietin treatment, phosphorylated on Ser-727 by RPS6KA5. Dephosphorylation on tyrosine residues by PTPN2 negatively regulates IL6/interleukin-6 signaling. Phosphorylation at Tyr-705 by PTK6, isoform M2 of PKM (PKM2) or FER leads to an increase of its transcriptional activity. Phosphorylation at Tyr-705 is increased in the presence of calcineurin. Phosphorylation at Tyr-640 by TYK2 negatively regulates transcriptional activity. Post-translationally, acetylated on lysine residues by EP300/p300, promoting its activation. Acetylation at Lys-49 and Lys-87 by EP300/p300 promotes its activation. Acetylation at Lys-87 by EP300/p300 promotes its association with BRD2 and recruitment to chromatin. Deacetylated at Lys-49 and Lys-87 by HDAC1. Acetylation at Lys-685 by EP300/p300 promotes its homodimerization and activation. Deacetylated at Lys-685 by HDAC3. Acetylated on lysine residues by CREBBP. Deacetylation by LOXL3 leads to disrupt STAT3 dimerization and inhibit STAT3 transcription activity. Oxidation of lysine residues to allysine on STAT3 preferentially takes place on lysine residues that are acetylated. In terms of processing, some lysine residues are oxidized to allysine by LOXL3, leading to disrupt STAT3 dimerization and inhibit STAT3 transcription activity. Oxidation of lysine residues to allysine on STAT3 preferentially takes place on lysine residues that are acetylated. (Microbial infection) Phosphorylated on Tyr-705 in the presence of S.typhimurium SarA. As to expression, heart, brain, placenta, lung, liver, skeletal muscle, kidney and pancreas. Expressed in naive CD4(+) T cells as well as T-helper Th17, Th1 and Th2 cells.

The protein localises to the cytoplasm. The protein resides in the nucleus. Functionally, signal transducer and transcription activator that mediates cellular responses to interleukins, KITLG/SCF, LEP and other growth factors. Once activated, recruits coactivators, such as NCOA1 or MED1, to the promoter region of the target gene. May mediate cellular responses to activated FGFR1, FGFR2, FGFR3 and FGFR4. Upon activation of IL6ST/gp130 signaling by interleukin-6 (IL6), binds to the IL6-responsive elements identified in the promoters of various acute-phase protein genes. Activated by IL31 through IL31RA. Acts as a regulator of inflammatory response by regulating differentiation of naive CD4(+) T-cells into T-helper Th17 or regulatory T-cells (Treg): acetylation promotes its transcription activity and cell differentiation while deacetylation and oxidation of lysine residues by LOXL3 inhibits differentiation. Involved in cell cycle regulation by inducing the expression of key genes for the progression from G1 to S phase, such as CCND1. Mediates the effects of LEP on melanocortin production, body energy homeostasis and lactation. May play an apoptotic role by transctivating BIRC5 expression under LEP activation. Cytoplasmic STAT3 represses macroautophagy by inhibiting EIF2AK2/PKR activity. Plays a crucial role in basal beta cell functions, such as regulation of insulin secretion. Following JAK/STAT signaling activation and as part of a complex with NFATC3 and NFATC4, binds to the alpha-beta E4 promoter region of CRYAB and activates transcription in cardiomyocytes. This Homo sapiens (Human) protein is Signal transducer and activator of transcription 3.